The chain runs to 240 residues: Aspartate/glutamate leucyltransferase (240 aa).

Belongs to the R-transferase family. Bpt subfamily.

Its subcellular location is the cytoplasm. It carries out the reaction N-terminal L-glutamyl-[protein] + L-leucyl-tRNA(Leu) = N-terminal L-leucyl-L-glutamyl-[protein] + tRNA(Leu) + H(+). It catalyses the reaction N-terminal L-aspartyl-[protein] + L-leucyl-tRNA(Leu) = N-terminal L-leucyl-L-aspartyl-[protein] + tRNA(Leu) + H(+). Functionally, functions in the N-end rule pathway of protein degradation where it conjugates Leu from its aminoacyl-tRNA to the N-termini of proteins containing an N-terminal aspartate or glutamate. The protein is Aspartate/glutamate leucyltransferase of Gluconobacter oxydans (strain 621H) (Gluconobacter suboxydans).